The sequence spans 85 residues: Large ribosomal subunit protein bL27 (85 aa).

The segment at 1–20 (MATKKAGGSTRNGRDSEAKR) is disordered.

The protein belongs to the bacterial ribosomal protein bL27 family.

The sequence is that of Large ribosomal subunit protein bL27 from Actinobacillus succinogenes (strain ATCC 55618 / DSM 22257 / CCUG 43843 / 130Z).